The chain runs to 235 residues: Aspartate/glutamate leucyltransferase (235 aa).

It belongs to the R-transferase family. Bpt subfamily.

The protein localises to the cytoplasm. The catalysed reaction is N-terminal L-glutamyl-[protein] + L-leucyl-tRNA(Leu) = N-terminal L-leucyl-L-glutamyl-[protein] + tRNA(Leu) + H(+). The enzyme catalyses N-terminal L-aspartyl-[protein] + L-leucyl-tRNA(Leu) = N-terminal L-leucyl-L-aspartyl-[protein] + tRNA(Leu) + H(+). Its function is as follows. Functions in the N-end rule pathway of protein degradation where it conjugates Leu from its aminoacyl-tRNA to the N-termini of proteins containing an N-terminal aspartate or glutamate. This chain is Aspartate/glutamate leucyltransferase, found in Stutzerimonas stutzeri (strain A1501) (Pseudomonas stutzeri).